The primary structure comprises 159 residues: Major strawberry allergen Fra a 1-C (159 aa).

This sequence belongs to the BetVI family. In terms of assembly, monomer.

This is Major strawberry allergen Fra a 1-C from Fragaria ananassa (Strawberry).